A 744-amino-acid polypeptide reads, in one-letter code: Catalase A (744 aa).

Active-site residues include His-93 and Asn-166. Tyr-380 is a heme binding site.

This sequence belongs to the catalase family. The cofactor is heme.

The protein localises to the peroxisome matrix. It carries out the reaction 2 H2O2 = O2 + 2 H2O. Functionally, catalyzes the degradation of hydrogen peroxide (H(2)O(2)) generated by peroxisomal oxidases to water and oxygen, thereby protecting cells from the toxic effects of hydrogen peroxide. The chain is Catalase A (catA) from Emericella nidulans (strain FGSC A4 / ATCC 38163 / CBS 112.46 / NRRL 194 / M139) (Aspergillus nidulans).